Reading from the N-terminus, the 411-residue chain is Probable G-protein coupled receptor AH9.1 (411 aa).

Topologically, residues M1–L18 are cytoplasmic. Residues F19–F39 traverse the membrane as a helical segment. Topologically, residues F40–D55 are extracellular. A helical transmembrane segment spans residues Y56–L76. Over N77–S87 the chain is Cytoplasmic. Residues I88 to P108 traverse the membrane as a helical segment. The Extracellular portion of the chain corresponds to F109–L131. Residues E132–V152 traverse the membrane as a helical segment. The Cytoplasmic segment spans residues D153–R176. A helical membrane pass occupies residues T177–F197. Over Q198–K229 the chain is Extracellular. N210 is a glycosylation site (N-linked (GlcNAc...) asparagine). Residues F230 to L250 traverse the membrane as a helical segment. Residues N251 to L299 lie on the Cytoplasmic side of the membrane. A helical membrane pass occupies residues F300 to V320. The Extracellular portion of the chain corresponds to R321–R333. Residues A334–C354 form a helical membrane-spanning segment. Residues S355 to V411 are Cytoplasmic-facing.

This sequence belongs to the G-protein coupled receptor 1 family.

It localises to the cell membrane. Functionally, not known. Putative receptor. In Caenorhabditis elegans, this protein is Probable G-protein coupled receptor AH9.1.